A 270-amino-acid polypeptide reads, in one-letter code: Gap junction beta-3 protein (270 aa).

Over 1–20 the chain is Cytoplasmic; sequence MDWKKLQDLLSGVNQYSTAF. A helical membrane pass occupies residues 21–40; sequence GRIWLSVVFVFRVLVYVVAA. Topologically, residues 41–75 are extracellular; it reads ERVWGDEQKDFDCNTRQPGCTNVCYDNFFPISNIR. Residues 76-98 form a helical membrane-spanning segment; it reads LWALQLIFVTCPSMLVILHVAYR. Residues 99–126 lie on the Cytoplasmic side of the membrane; it reads EERERKHRQKHGEQCAKLYSHPGKKHGG. A helical membrane pass occupies residues 127–149; that stretch reads LWWTYLFSLIFKLIIELVFLYVL. At 150–188 the chain is on the extracellular side; it reads HTLWHGFTMPRLVQCASIVPCPNTVDCYIARPTEKKVFT. The helical transmembrane segment at 189–211 threads the bilayer; sequence YFMVGASAVCIILTICEICYLIF. Residues 212–270 are Cytoplasmic-facing; sequence HRIMRGISKGKSTKSISSPKSSSRASTCRCHHKLLESGDPEADPASEKLQASAPSLTPI. The segment at 246 to 270 is disordered; that stretch reads LESGDPEADPASEKLQASAPSLTPI.

The protein belongs to the connexin family. Beta-type (group I) subfamily. A connexon is composed of a hexamer of connexins. Interacts with CNST.

It localises to the cell membrane. Its subcellular location is the cell junction. The protein resides in the gap junction. Functionally, one gap junction consists of a cluster of closely packed pairs of transmembrane channels, the connexons, through which materials of low MW diffuse from one cell to a neighboring cell. In Mus musculus (Mouse), this protein is Gap junction beta-3 protein (Gjb3).